A 507-amino-acid chain; its full sequence is Chromosomal replication initiator protein DnaA (507 aa).

The tract at residues 1 to 72 is domain I, interacts with DnaA modulators; the sequence is MNNYNKIWEI…KKITKLKFEE (72 aa). Residues 72 to 162 are domain II; sequence EKIIIEFVSE…KISFNKYNYG (91 aa). The interval 163–384 is domain III, AAA+ region; the sequence is NTNPKYSFDN…GALLRLLNYA (222 aa). ATP is bound by residues Gly-207, Gly-209, Lys-210, and Thr-211. The interval 385-507 is domain IV, binds dsDNA; it reads QTFGYDIDIN…LELILKKINS (123 aa).

The protein belongs to the DnaA family. Oligomerizes as a right-handed, spiral filament on DNA at oriC.

Its subcellular location is the cytoplasm. Plays an essential role in the initiation and regulation of chromosomal replication. ATP-DnaA binds to the origin of replication (oriC) to initiate formation of the DNA replication initiation complex once per cell cycle. Binds the DnaA box (a 9 base pair repeat at the origin) and separates the double-stranded (ds)DNA. Forms a right-handed helical filament on oriC DNA; dsDNA binds to the exterior of the filament while single-stranded (ss)DNA is stabiized in the filament's interior. The ATP-DnaA-oriC complex binds and stabilizes one strand of the AT-rich DNA unwinding element (DUE), permitting loading of DNA polymerase. After initiation quickly degrades to an ADP-DnaA complex that is not apt for DNA replication. Binds acidic phospholipids. The protein is Chromosomal replication initiator protein DnaA of Onion yellows phytoplasma (strain OY-M).